Here is a 399-residue protein sequence, read N- to C-terminus: Phosphopentomutase (399 aa).

6 residues coordinate Mn(2+): Asp10, Asp296, His301, Asp337, His338, and His349.

It belongs to the phosphopentomutase family. Requires Mn(2+) as cofactor.

The protein resides in the cytoplasm. The enzyme catalyses 2-deoxy-alpha-D-ribose 1-phosphate = 2-deoxy-D-ribose 5-phosphate. It catalyses the reaction alpha-D-ribose 1-phosphate = D-ribose 5-phosphate. It functions in the pathway carbohydrate degradation; 2-deoxy-D-ribose 1-phosphate degradation; D-glyceraldehyde 3-phosphate and acetaldehyde from 2-deoxy-alpha-D-ribose 1-phosphate: step 1/2. In terms of biological role, isomerase that catalyzes the conversion of deoxy-ribose 1-phosphate (dRib-1-P) and ribose 1-phosphate (Rib-1-P) to deoxy-ribose 5-phosphate (dRib-5-P) and ribose 5-phosphate (Rib-5-P), respectively. This chain is Phosphopentomutase, found in Idiomarina loihiensis (strain ATCC BAA-735 / DSM 15497 / L2-TR).